Here is a 313-residue protein sequence, read N- to C-terminus: Dihydroorotate dehydrogenase B (NAD(+)), catalytic subunit (313 aa).

Residues Ser21 and 45–46 each bind FMN; that span reads KA. Residues Lys45 and 69–73 each bind substrate; that span reads NAIGL. Residues Asn99 and Asn127 each coordinate FMN. Asn127 lines the substrate pocket. Cys130 serves as the catalytic Nucleophile. An FMN-binding site is contributed by Ile191. 192 to 193 serves as a coordination point for substrate; the sequence is NT. Residues Gly217, 243-244, and 265-266 each bind FMN; these read GG and GT.

The protein belongs to the dihydroorotate dehydrogenase family. Type 1 subfamily. Heterotetramer of 2 PyrK and 2 PyrD type B subunits. Requires FMN as cofactor.

It is found in the cytoplasm. It catalyses the reaction (S)-dihydroorotate + NAD(+) = orotate + NADH + H(+). It functions in the pathway pyrimidine metabolism; UMP biosynthesis via de novo pathway; orotate from (S)-dihydroorotate (NAD(+) route): step 1/1. Catalyzes the conversion of dihydroorotate to orotate with NAD(+) as electron acceptor. The polypeptide is Dihydroorotate dehydrogenase B (NAD(+)), catalytic subunit (pyrD) (Bacillus caldolyticus).